The primary structure comprises 875 residues: Alanine--tRNA ligase (875 aa).

Positions 564, 568, 666, and 670 each coordinate Zn(2+).

The protein belongs to the class-II aminoacyl-tRNA synthetase family. As to quaternary structure, homotetramer. It depends on Zn(2+) as a cofactor.

The protein resides in the cytoplasm. The enzyme catalyses tRNA(Ala) + L-alanine + ATP = L-alanyl-tRNA(Ala) + AMP + diphosphate. Catalyzes the attachment of alanine to tRNA(Ala) in a two-step reaction: alanine is first activated by ATP to form Ala-AMP and then transferred to the acceptor end of tRNA(Ala). Also edits incorrectly charged Ser-tRNA(Ala) and Gly-tRNA(Ala) via its editing domain. The chain is Alanine--tRNA ligase from Citrobacter koseri (strain ATCC BAA-895 / CDC 4225-83 / SGSC4696).